The sequence spans 368 residues: Phospho-N-acetylmuramoyl-pentapeptide-transferase (368 aa).

The next 9 membrane-spanning stretches (helical) occupy residues 30–50 (AAAITSLLITLLAGPGFIRYL), 72–92 (LPTMGGLLIIFSIEVSVLLWS), 98–118 (HVWLIMLAVLWMGVVGFIDDY), 139–159 (VALGLVVGIYTSLDPAFSVLM), 170–190 (LTIDYGYFYIPVVIFIITALS), 208–228 (AIVVFALGGFAYLAGNAVYAT), 238–258 (GGEIAVVCMAIVMASVGFLWF), 264–286 (EIFMGDTGSLALGSAIAVIALLI), and 345–365 (KIVIRFWIITILFFLTSLMTL).

This sequence belongs to the glycosyltransferase 4 family. MraY subfamily. Mg(2+) serves as cofactor.

The protein resides in the cell inner membrane. It carries out the reaction UDP-N-acetyl-alpha-D-muramoyl-L-alanyl-gamma-D-glutamyl-meso-2,6-diaminopimeloyl-D-alanyl-D-alanine + di-trans,octa-cis-undecaprenyl phosphate = di-trans,octa-cis-undecaprenyl diphospho-N-acetyl-alpha-D-muramoyl-L-alanyl-D-glutamyl-meso-2,6-diaminopimeloyl-D-alanyl-D-alanine + UMP. The protein operates within cell wall biogenesis; peptidoglycan biosynthesis. Functionally, catalyzes the initial step of the lipid cycle reactions in the biosynthesis of the cell wall peptidoglycan: transfers peptidoglycan precursor phospho-MurNAc-pentapeptide from UDP-MurNAc-pentapeptide onto the lipid carrier undecaprenyl phosphate, yielding undecaprenyl-pyrophosphoryl-MurNAc-pentapeptide, known as lipid I. The polypeptide is Phospho-N-acetylmuramoyl-pentapeptide-transferase (Chlorobium luteolum (strain DSM 273 / BCRC 81028 / 2530) (Pelodictyon luteolum)).